A 120-amino-acid polypeptide reads, in one-letter code: NAD(P)H-quinone oxidoreductase subunit 3, chloroplastic (120 aa).

The next 3 helical transmembrane spans lie at 7-27 (YDSFWIFLLVCISIPLLAFSI), 63-83 (YMFALVFTVFDVETVFLYPWA), and 89-109 (LGLFAFVEVIVFIFILIVGLV).

It belongs to the complex I subunit 3 family. NDH is composed of at least 16 different subunits, 5 of which are encoded in the nucleus.

The protein resides in the plastid. Its subcellular location is the chloroplast thylakoid membrane. The enzyme catalyses a plastoquinone + NADH + (n+1) H(+)(in) = a plastoquinol + NAD(+) + n H(+)(out). The catalysed reaction is a plastoquinone + NADPH + (n+1) H(+)(in) = a plastoquinol + NADP(+) + n H(+)(out). Functionally, NDH shuttles electrons from NAD(P)H:plastoquinone, via FMN and iron-sulfur (Fe-S) centers, to quinones in the photosynthetic chain and possibly in a chloroplast respiratory chain. The immediate electron acceptor for the enzyme in this species is believed to be plastoquinone. Couples the redox reaction to proton translocation, and thus conserves the redox energy in a proton gradient. The polypeptide is NAD(P)H-quinone oxidoreductase subunit 3, chloroplastic (Adiantum capillus-veneris (Maidenhair fern)).